An 859-amino-acid polypeptide reads, in one-letter code: MEPLSHRGLPRLSWIDTLYSNFSYGAEDYDAEGHEEQKGPPEGSETMPYIDESPTMSPQLSARSQGGGESISPTPPEGLAPGVEAGKGLEMRKLVLSGFLASEEIYINQLEALLLPMKPLKATATTSQPVLTIQQIETIFYKIQDIYEIHKEFYDNLCPKVQQWDSQVTMGHLFQKLASQLGVYKAFVDNYKVALETAEKCSQSNNQFQKISEELKVKGPKDSKDSHTSVTMEALLYKPIDRVTRSTLVLHDLLKHTPVDHPDYPLLQDALRISQNFLSSINEDIDPRRTAVTTPKGETRQLVKDGFLVEMSESSRKLRHVFLFTDVLLCAKLKKTSAGKHQQYDCKWYIPLADLVFPSPEESEASPQVHPFPDHELEDMKVKISALKSEIQKEKANKGQSRAIERLKKKMFENEFLLLLNSPTIPFRIHNRNGKSYLFLLSSDYERSEWREAIQKLQKKDLQAFVLSSVELQVLTGSCFKLRTVHNIPVTSNKDDDESPGLYGFLHVIVHSAKGFKQSANLYCTLEVDSFGYFVSKAKTRVFRDTTEPKWDEEFEIELEGSQSLRILCYEKCYDKTKVNKDNNEIVDKIMGKGQIQLDPQTVESKNWHTDVIEMNGIKVEFSMKFTSRDMSLKRTPSKKQTGVFGVKISVVTKRERSKVPYIVRQCIEEVEKRGIEEVGIYRISGVATDIQALKAVFDANNKDILLMLSDMDINAIAGTLKLYFRELPEPLLTDRLYPAFMEGIALSDPAAKENCMMHLLRSLPDPNLITFLFLLEHLKRVAEKEPINKMSLHNLATVFGPTLLRPSEVESKAHLTSAADIWSHDVMAQVQVLLYYLQHPPISFAELKRNTLYFSTDV.

The segment at 31 to 84 is disordered; it reads AEGHEEQKGPPEGSETMPYIDESPTMSPQLSARSQGGGESISPTPPEGLAPGVE. Over residues 54-64 the composition is skewed to polar residues; sequence PTMSPQLSARS. The residue at position 57 (Ser-57) is a Phosphoserine. The region spanning 91-284 is the DH domain; that stretch reads MRKLVLSGFL…QNFLSSINED (194 aa). The 159-residue stretch at 301 to 459 folds into the PH domain; sequence QLVKDGFLVE…WREAIQKLQK (159 aa). One can recognise a C2 domain in the interval 484–613; that stretch reads TVHNIPVTSN…ESKNWHTDVI (130 aa). Positions 647–845 constitute a Rho-GAP domain; that stretch reads VKISVVTKRE…YYLQHPPISF (199 aa).

Interacts with DLG4. In terms of tissue distribution, expressed in brain, including the cortex, hippocampus, cerebellum, and brainstem, as well as the spinal cord (at protein level).

It localises to the cell projection. The protein resides in the dendritic spine. Its subcellular location is the axon. It is found in the synapse. Protein with a unique structure having two opposing regulatory activities toward small GTP-binding proteins. The C-terminus is a GTPase-activating protein domain which stimulates GTP hydrolysis by RAC1, RAC2 and CDC42. Accelerates the intrinsic rate of GTP hydrolysis of RAC1 or CDC42, leading to down-regulation of the active GTP-bound form. The central Dbl homology (DH) domain functions as guanine nucleotide exchange factor (GEF) that modulates the GTPases CDC42, RHOA and RAC1. Promotes the conversion of CDC42, RHOA and RAC1 from the GDP-bound to the GTP-bound form. Functions as an important negative regulator of neuronal RAC1 activity. Regulates macrophage functions such as CSF-1 directed motility and phagocytosis through the modulation of RAC1 activity. The chain is Active breakpoint cluster region-related protein from Rattus norvegicus (Rat).